We begin with the raw amino-acid sequence, 502 residues long: Cardiolipin synthase (502 aa).

Transmembrane regions (helical) follow at residues 7–27 (VIIFVLAVAAFLFLTNDYWEG), 29–49 (LLGGLSILISCSVVFIAFVIS), and 59–79 (ITWLVVLGSFPLIGFFFYLMF). PLD phosphodiesterase domains are found at residues 237 to 264 (INFRNHRKIIVIDGTIGFVGGLNIGDEY) and 415 to 442 (SKGFLHSKIMIVDGELASIGTANMDMRS). Active-site residues include His-242, Lys-244, Asp-249, His-420, Lys-422, and Asp-427.

The protein belongs to the phospholipase D family. Cardiolipin synthase subfamily.

Its subcellular location is the cell membrane. The catalysed reaction is 2 a 1,2-diacyl-sn-glycero-3-phospho-(1'-sn-glycerol) = a cardiolipin + glycerol. In terms of biological role, catalyzes the reversible phosphatidyl group transfer from one phosphatidylglycerol molecule to another to form cardiolipin (CL) (diphosphatidylglycerol) and glycerol. The sequence is that of Cardiolipin synthase (cls) from Geobacillus sp. (strain WCH70).